The chain runs to 688 residues: Soluble guanylate cyclase gcy-35 (688 aa).

Histidine 105 is a heme binding site. The stretch at 358-401 (LNQSRMSQVELNRTLEETTKKLKKMAQELEIEKQKTDELLCELM) forms a coiled coil. The region spanning 424-552 (TLLFTDIVTF…DTVNVANKME (129 aa)) is the Guanylate cyclase domain. Aspartate 429 and aspartate 473 together coordinate Mg(2+). A disordered region spans residues 644–688 (VENGNSAQNNHNNNNNTHHSGRKLMNGSSVDPGSHHIRSPTCTIS). Residues 646–659 (NGNSAQNNHNNNNN) show a composition bias toward low complexity.

It belongs to the adenylyl cyclase class-4/guanylyl cyclase family. In terms of assembly, heterodimer; heterodimerizes with gcy-36, and possibly with other soluble guanylate cyclases. The cofactor is heme. In terms of tissue distribution, expressed in URX, AQR and PQR neurons. Also expressed in ALN, SDQ and BDU neurons, and variably in AVM, PLM and PLN neurons, pharyngeal and body wall muscles, and the excretory cell.

It is found in the cytoplasm. The protein resides in the cell projection. Its subcellular location is the dendrite. The catalysed reaction is GTP = 3',5'-cyclic GMP + diphosphate. Regulated by molecular oxygen, which binds to the heme binding site. Probably not activated by nitric oxide (NO). Plays a central role in social feeding behavior and oxygen sensation by synthesizing 3',5'-cyclic guanosine monophosphate (cGMP) from GTP. Oxygen, which binds to its heme-binding sites, probably regulates social behavior by modulating its activity. cGMP is a common second messenger in sensory transduction and is implicated in oxygen sensation. Indeed, C.elegans exhibits a strong behavioral preference for 5-12% oxygen, avoiding higher and lower oxygen levels; a higher level of oxygen inducing a naturally polymorphic social feeding behavior. Involved in avoidance of hyperoxia and for oxygen-induced aggregation and bordering, probably by mediating oxygen-sensing in URX, AQR and PQR sensory neurons. The polypeptide is Soluble guanylate cyclase gcy-35 (gcy-35) (Caenorhabditis elegans).